Reading from the N-terminus, the 962-residue chain is Insulin-degrading enzyme homolog (962 aa).

Residues 1–10 are compositionally biased toward low complexity; that stretch reads MVANEQQQQQ. The interval 1-21 is disordered; it reads MVANEQQQQQQEEERKEVKLI. A Zn(2+)-binding site is contributed by His74. The active-site Proton acceptor is the Glu77. Positions 78 and 155 each coordinate Zn(2+).

This sequence belongs to the peptidase M16 family. In terms of assembly, homodimer. Requires Zn(2+) as cofactor.

It is found in the cytoplasm. The polypeptide is Insulin-degrading enzyme homolog (Dictyostelium discoideum (Social amoeba)).